We begin with the raw amino-acid sequence, 110 residues long: Large ribosomal subunit protein uL22 (110 aa).

It belongs to the universal ribosomal protein uL22 family. In terms of assembly, part of the 50S ribosomal subunit.

This protein binds specifically to 23S rRNA; its binding is stimulated by other ribosomal proteins, e.g. L4, L17, and L20. It is important during the early stages of 50S assembly. It makes multiple contacts with different domains of the 23S rRNA in the assembled 50S subunit and ribosome. In terms of biological role, the globular domain of the protein is located near the polypeptide exit tunnel on the outside of the subunit, while an extended beta-hairpin is found that lines the wall of the exit tunnel in the center of the 70S ribosome. The protein is Large ribosomal subunit protein uL22 of Aliivibrio fischeri (strain MJ11) (Vibrio fischeri).